The chain runs to 205 residues: Large ribosomal subunit protein eL15 (205 aa).

2 disordered regions span residues 70–90 and 172–197; these read GRKRQVPGGRTGGKPKTHGVN and RGLRRKGTHRASKTRPSRQANYKRRN.

It belongs to the eukaryotic ribosomal protein eL15 family.

The chain is Large ribosomal subunit protein eL15 (rpl15-1) from Dictyostelium discoideum (Social amoeba).